The sequence spans 258 residues: Distal membrane-arm assembly complex protein 2 (258 aa).

Belongs to the ATP synthase subunit s family. Interacts with incompletely assembled mitochondrial NADH:ubiquinone oxidoreductase complex (complex I).

It localises to the mitochondrion. Required for the assembly of the mitochondrial NADH:ubiquinone oxidoreductase complex (complex I). Involved in the assembly of the distal region of complex I. The protein is Distal membrane-arm assembly complex protein 2 (Dmac2) of Mus musculus (Mouse).